The sequence spans 206 residues: LexA repressor (206 aa).

Residues 28 to 48 (RAEIATRLGFKSANAAEEHLK) constitute a DNA-binding region (H-T-H motif). Catalysis depends on for autocatalytic cleavage activity residues Ser123 and Lys160.

This sequence belongs to the peptidase S24 family. Homodimer.

It catalyses the reaction Hydrolysis of Ala-|-Gly bond in repressor LexA.. Functionally, represses a number of genes involved in the response to DNA damage (SOS response), including recA and lexA. In the presence of single-stranded DNA, RecA interacts with LexA causing an autocatalytic cleavage which disrupts the DNA-binding part of LexA, leading to derepression of the SOS regulon and eventually DNA repair. The chain is LexA repressor from Shewanella sp. (strain MR-7).